The following is a 254-amino-acid chain: tRNA (guanine-N(7)-)-methyltransferase (254 aa).

Positions 1 to 11 are enriched in basic and acidic residues; sequence MSISDNSREEL. The segment at 1–25 is disordered; that stretch reads MSISDNSREELGELPAGRPLQSEFN. Residues Glu-83, Glu-108, Asp-135, and Asp-158 each contribute to the S-adenosyl-L-methionine site. Residue Asp-158 is part of the active site. Lys-162 is a binding site for substrate. The interval 164 to 169 is interaction with RNA; it reads RHNKRR. Substrate is bound by residues Asp-194 and 232-235; that span reads TKFE.

This sequence belongs to the class I-like SAM-binding methyltransferase superfamily. TrmB family.

It catalyses the reaction guanosine(46) in tRNA + S-adenosyl-L-methionine = N(7)-methylguanosine(46) in tRNA + S-adenosyl-L-homocysteine. The protein operates within tRNA modification; N(7)-methylguanine-tRNA biosynthesis. Its function is as follows. Catalyzes the formation of N(7)-methylguanine at position 46 (m7G46) in tRNA. This is tRNA (guanine-N(7)-)-methyltransferase from Corynebacterium efficiens (strain DSM 44549 / YS-314 / AJ 12310 / JCM 11189 / NBRC 100395).